The following is a 287-amino-acid chain: Formamidopyrimidine-DNA glycosylase (287 aa).

Residue Pro-2 is the Schiff-base intermediate with DNA of the active site. The Proton donor role is filled by Glu-3. Lys-61 serves as the catalytic Proton donor; for beta-elimination activity. Residues His-95, Arg-115, and Arg-157 each coordinate DNA. An FPG-type zinc finger spans residues 243–277; sequence NVYGRADQPCRRCGTPVRREAFMNRSSYSCPRCQP. The active-site Proton donor; for delta-elimination activity is Arg-267.

This sequence belongs to the FPG family. As to quaternary structure, monomer. It depends on Zn(2+) as a cofactor.

The enzyme catalyses Hydrolysis of DNA containing ring-opened 7-methylguanine residues, releasing 2,6-diamino-4-hydroxy-5-(N-methyl)formamidopyrimidine.. It catalyses the reaction 2'-deoxyribonucleotide-(2'-deoxyribose 5'-phosphate)-2'-deoxyribonucleotide-DNA = a 3'-end 2'-deoxyribonucleotide-(2,3-dehydro-2,3-deoxyribose 5'-phosphate)-DNA + a 5'-end 5'-phospho-2'-deoxyribonucleoside-DNA + H(+). Functionally, involved in base excision repair of DNA damaged by oxidation or by mutagenic agents. Acts as a DNA glycosylase that recognizes and removes damaged bases. Has a preference for oxidized purines, such as 7,8-dihydro-8-oxoguanine (8-oxoG). Has AP (apurinic/apyrimidinic) lyase activity and introduces nicks in the DNA strand. Cleaves the DNA backbone by beta-delta elimination to generate a single-strand break at the site of the removed base with both 3'- and 5'-phosphates. This is Formamidopyrimidine-DNA glycosylase from Salinispora arenicola (strain CNS-205).